Consider the following 321-residue polypeptide: Putative sulfotransferase vep-2 (321 aa).

Residues 11 to 31 (IARVLIIIASISVICITLFIS) traverse the membrane as a helical segment.

It to C.elegans C41C4.1 and C18B2.2.

It localises to the membrane. This is Putative sulfotransferase vep-2 from Caenorhabditis elegans.